Reading from the N-terminus, the 138-residue chain is Ribosome maturation factor RimP (138 aa).

It belongs to the RimP family.

Its subcellular location is the cytoplasm. In terms of biological role, required for maturation of 30S ribosomal subunits. The polypeptide is Ribosome maturation factor RimP (Campylobacter curvus (strain 525.92)).